The sequence spans 475 residues: UDP-N-acetylmuramate--L-alanine ligase (475 aa).

114–120 (GTHGKTT) is a binding site for ATP.

This sequence belongs to the MurCDEF family.

The protein localises to the cytoplasm. The enzyme catalyses UDP-N-acetyl-alpha-D-muramate + L-alanine + ATP = UDP-N-acetyl-alpha-D-muramoyl-L-alanine + ADP + phosphate + H(+). It participates in cell wall biogenesis; peptidoglycan biosynthesis. Functionally, cell wall formation. The sequence is that of UDP-N-acetylmuramate--L-alanine ligase from Bartonella henselae (strain ATCC 49882 / DSM 28221 / CCUG 30454 / Houston 1) (Rochalimaea henselae).